A 550-amino-acid polypeptide reads, in one-letter code: Beta-cubebene synthase (550 aa).

Mg(2+) is bound by residues aspartate 303, aspartate 307, aspartate 447, and glutamate 455. A DDXXD motif motif is present at residues 303-307 (DDTYD).

This sequence belongs to the terpene synthase family. Tpsa subfamily. The cofactor is Mg(2+). Expressed in young developing leaves and in stamens. Not detected in tepals and carpels.

The catalysed reaction is (2E,6E)-farnesyl diphosphate = beta-cubebene + diphosphate. Its pathway is secondary metabolite biosynthesis; terpenoid biosynthesis. In terms of biological role, sesquiterpene synthase converting farnesyl diphosphate into beta-cubebene (24.5%), alpha-muurolene (19.3%), delta-cadinol (18.6%), delta-elemene (16.0%), tau-muurolene (10.8%), and beta-elemene (10.8%). No activity with geranyl diphosphate or geranylgeranyl diphosphate. The chain is Beta-cubebene synthase from Magnolia grandiflora (Southern magnolia).